The sequence spans 185 residues: Putative lipoprotein LprB (185 aa).

The first 24 residues, 1–24, serve as a signal peptide directing secretion; the sequence is MRRKVRRLTLAVSALVALFPAVAG. A lipid anchor (N-palmitoyl cysteine) is attached at cysteine 25. Cysteine 25 is lipidated: S-diacylglycerol cysteine. The interval 26–50 is disordered; it reads SDSGDNKPGATIPSTPANAEGRHGP.

The protein resides in the cell membrane. The sequence is that of Putative lipoprotein LprB (lprB) from Mycobacterium tuberculosis (strain CDC 1551 / Oshkosh).